The following is a 391-amino-acid chain: MSRFLICSFALVLLYPAGIDMYLVGLPRIAADLNASEAQLHIAFSVYLAGMAAAMLFAGKVADRSGRKPVAIPGAALFIIASVFCSLAETSTLFLAGRFLQGLGAGCCYVVAFAILRDTLDDRRRAKVLSLLNGITCIIPVLAPVLGHLIMLKFPWQSLFWAMAMMGIAVLMLSLFILKETRPASPAASDKPRENSESLLNRFFLSRVVITTLSVSVILTFVNTSPVLLMEIMGFERGEYATIMALTAGVSMTVSFSTPFALGIFKPRTLMITSQVLFLAAGITLAVSPSHAVSLFGITLICAGFSVGFGVAMSQALGPFSLRAGVASSTLGIAQVCGSSLWIWLAAVVGIGAWNMLIGILIACSIVSLLLIMFVAPGRPVAAHEEIHHHA.

Helical transmembrane passes span 4 to 24 (FLICSFALVLLYPAGIDMYLV), 42 to 62 (IAFSVYLAGMAAAMLFAGKVA), 69 to 89 (PVAIPGAALFIIASVFCSLAE), 93 to 113 (LFLAGRFLQGLGAGCCYVVAF), 131 to 151 (LLNGITCIIPVLAPVLGHLIM), 158 to 178 (SLFWAMAMMGIAVLMLSLFIL), 203 to 222 (FFLSRVVITTLSVSVILTFV), 245 to 265 (ALTAGVSMTVSFSTPFALGIF), 269 to 289 (TLMITSQVLFLAAGITLAVSP), 293 to 313 (VSLFGITLICAGFSVGFGVAM), 331 to 351 (LGIAQVCGSSLWIWLAAVVGI), and 356 to 376 (MLIGILIACSIVSLLLIMFVA).

This sequence belongs to the major facilitator superfamily. DHA1 family. MdtL (TC 2.A.1.2.22) subfamily.

The protein localises to the cell inner membrane. Its function is as follows. Confers resistance to chloramphenicol. The protein is Multidrug resistance protein MdtL of Escherichia coli O9:H4 (strain HS).